Reading from the N-terminus, the 1087-residue chain is 2'-5'-oligoadenylate synthase 3 (1087 aa).

Met1 carries the post-translational modification N-acetylmethionine. The interval 6–343 (TPAAALDRFV…GDPVQSWKGP (338 aa)) is OAS domain 1. Interaction with dsRNA regions lie at residues 12–57 (DRFV…VLKT) and 186–200 (ELRR…AKLK). The interval 344 to 410 (GLPRAGCSGL…VPGMALDLSQ (67 aa)) is linker. A Phosphothreonine modification is found at Thr365. OAS domain regions lie at residues 411-742 (IPTK…PWDV) and 750-1084 (TPAG…WPVK). Residue Ser804 participates in ATP binding. Residues Asp816, Asp818, and Asp888 each coordinate Mg(2+). ATP is bound by residues Arg947, Lys950, and Gln969.

Belongs to the 2-5A synthase family. Monomer. The cofactor is Mg(2+). Present at high level in placenta trophoblast.

The protein localises to the cytoplasm. The protein resides in the nucleus. The enzyme catalyses 3 ATP = 5'-triphosphoadenylyl-(2'-&gt;5')-adenylyl-(2'-&gt;5')-adenosine + 2 diphosphate. Produced as a latent enzyme which is activated by dsRNA generated during the course of viral infection. Strongly activated by long dsRNAs at least 50 nucleotides in length. ssRNA does not activate the enzyme. Functionally, interferon-induced, dsRNA-activated antiviral enzyme which plays a critical role in cellular innate antiviral response. In addition, it may also play a role in other cellular processes such as apoptosis, cell growth, differentiation and gene regulation. Synthesizes preferentially dimers of 2'-5'-oligoadenylates (2-5A) from ATP which then bind to the inactive monomeric form of ribonuclease L (RNase L) leading to its dimerization and subsequent activation. Activation of RNase L leads to degradation of cellular as well as viral RNA, resulting in the inhibition of protein synthesis, thus terminating viral replication. Can mediate the antiviral effect via the classical RNase L-dependent pathway or an alternative antiviral pathway independent of RNase L. Displays antiviral activity against Chikungunya virus (CHIKV), Dengue virus, Sindbis virus (SINV) and Semliki forest virus (SFV). This Homo sapiens (Human) protein is 2'-5'-oligoadenylate synthase 3 (OAS3).